The sequence spans 39 residues: Cytochrome b6-f complex subunit 5 (39 aa).

Residues 5-25 (LLCGIVLGLVPITLLGLFVSA) traverse the membrane as a helical segment.

This sequence belongs to the PetG family. As to quaternary structure, the 4 large subunits of the cytochrome b6-f complex are cytochrome b6, subunit IV (17 kDa polypeptide, PetD), cytochrome f and the Rieske protein, while the 4 small subunits are PetG, PetL, PetM and PetN. The complex functions as a dimer.

Its subcellular location is the cellular thylakoid membrane. Component of the cytochrome b6-f complex, which mediates electron transfer between photosystem II (PSII) and photosystem I (PSI), cyclic electron flow around PSI, and state transitions. PetG is required for either the stability or assembly of the cytochrome b6-f complex. The sequence is that of Cytochrome b6-f complex subunit 5 from Prochlorococcus marinus (strain MIT 9301).